The chain runs to 264 residues: Cell division protein DivIB (264 aa).

The Cytoplasmic portion of the chain corresponds to 1 to 23; sequence MAVYEERIPQVKQQRPRRRGNRK. The chain crosses the membrane as a helical span at residues 24–44; the sequence is LVFLLVLFFLTILIIVFIRSP. The Extracellular segment spans residues 45–264; it reads YSKVQEIRVT…GQEQPQQPQQ (220 aa). A POTRA domain is found at 46 to 114; sequence SKVQEIRVTG…GLITLHITEQ (69 aa).

The protein belongs to the FtsQ/DivIB family. DivIB subfamily.

It is found in the cell membrane. Cell division protein that may be involved in stabilizing or promoting the assembly of the division complex. The polypeptide is Cell division protein DivIB (Brevibacillus brevis (strain 47 / JCM 6285 / NBRC 100599)).